We begin with the raw amino-acid sequence, 168 residues long: MFEQEDEWISKTQMKKQMNDLQDLGMALTKLSNDTLKKIGLDADLYEAVTAYKKITSNGALKRQAQFIGRLMRDTDPAPIEAFLAKLRGDDAAHNAFLQRVEQARVRLLADDGALTQFMSDFPHADAGKLRTLIRNTKKEQEQNKPPKNFRALFQELKTVMENGDAEI.

The protein belongs to the DarP family.

It localises to the cytoplasm. Its function is as follows. Member of a network of 50S ribosomal subunit biogenesis factors which assembles along the 30S-50S interface, preventing incorrect 23S rRNA structures from forming. Promotes peptidyl transferase center (PTC) maturation. In Neisseria meningitidis serogroup B (strain ATCC BAA-335 / MC58), this protein is Dual-action ribosomal maturation protein DarP.